Here is a 150-residue protein sequence, read N- to C-terminus: Ribonuclease HI (150 aa).

The region spanning 1-142 is the RNase H type-1 domain; it reads MSDSVELFTD…ADQLANRGVD (142 aa). 4 residues coordinate Mg(2+): aspartate 10, glutamate 48, aspartate 70, and aspartate 134.

It belongs to the RNase H family. Monomer. Mg(2+) serves as cofactor.

It is found in the cytoplasm. It carries out the reaction Endonucleolytic cleavage to 5'-phosphomonoester.. Endonuclease that specifically degrades the RNA of RNA-DNA hybrids. The protein is Ribonuclease HI of Pseudomonas syringae pv. tomato (strain ATCC BAA-871 / DC3000).